A 494-amino-acid polypeptide reads, in one-letter code: MAWPNVFQRGSLLSQFSHHHVVVFLLTFFSYSLLHASRKTFSNVKVSISEQWTPSAFNTSVELPVEIWSSNHLFPSAEKATLFLGTLDTIFLFSYAVGLFISGIVGDRLNLRWVLSFGMCSSALVVFVFGALTEWLRFYNKWLYCCLWIVNGLLQSTGWPCVVAVMGNWFGKAGRGVVFGLWSACASVGNILGACLASSVLQYGYEYAFLVTASVQFAGGIVIFFGLLVSPEEIGLSGIEAEENFEEDSHRPLINGGENEDEYEPNYSIQDDSSVAQVKAISFYQACCLPGVIPYSLAYACLKLVNYSFFFWLPFYLSNNFGWKEAEADKLSIWYDVGGIIGGTLQGFISDVLQKRAPVLALSLLLAVGSLIGYSRSPNDKSINALLMTVTGFFIGGPSNMISSAISADLGRQELIQRSSEALATVTGIVDGSGSIGAAVGQYLVSLIRDKLGWMWVFYFFILMTSCTIVFISPLIVREIFSLVLRRQAHILRE.

The helical transmembrane segment at 16–36 threads the bilayer; that stretch reads FSHHHVVVFLLTFFSYSLLHA. N58 carries an N-linked (GlcNAc...) asparagine glycan. 5 helical membrane-spanning segments follow: residues 81–101, 113–133, 147–167, 177–197, and 209–229; these read TLFL…GLFI, WVLS…GALT, LWIV…AVMG, VVFG…ACLA, and FLVT…GLLV. N266 carries N-linked (GlcNAc...) asparagine glycosylation. 6 consecutive transmembrane segments (helical) span residues 297-317, 333-353, 357-377, 386-406, 428-448, and 452-472; these read LAYA…PFYL, IWYD…SDVL, APVL…YSRS, LLMT…SSAI, GIVD…VSLI, and LGWM…IVFI.

Belongs to the major facilitator superfamily. Organophosphate:Pi antiporter (OPA) (TC 2.A.1.4) family. As to quaternary structure, interacts with ATRAID; the interaction is direct and both proteins are mutually dependent for their stability. Post-translationally, glycosylated. In terms of tissue distribution, expressed in liver, kidney, intestine and pancreas.

It localises to the endoplasmic reticulum membrane. It is found in the lysosome membrane. In terms of biological role, unlike the other SLC37 members, lacks glucose-6-phosphate antiporter activity. In osteoclasts, forms a transporter complex with ATRAID for nitrogen-containing-bisphophonates (N-BPs) required for releasing N-BP molecules that have trafficked to lysosomes through fluid-phase endocytosis into the cytosol. This is Sugar phosphate exchanger 3 from Homo sapiens (Human).